The primary structure comprises 211 residues: BAG family molecular chaperone regulator 2 (211 aa).

N-acetylalanine is present on Ala2. Phosphoserine is present on residues Ser20, Ser31, and Ser73. A coiled-coil region spans residues 20-61; it reads SMADRSSRLLESLDQLELRVEALREAATAVEQEKEILLEMIH. The BAG domain maps to 109-189; it reads SLKHATRIID…NIENSDKAIK (81 aa).

As to quaternary structure, binds to the ATPase domain of HSP/HSC70 chaperones. May interact with NWD1. Interacts with HSPA1A (via NBD), HSPA1B (via NBD) and HSPA8. May interact with DNJC9; the interaction seems to be histone-dependent.

Functionally, co-chaperone for HSP70 and HSC70 chaperone proteins. Acts as a nucleotide-exchange factor (NEF) promoting the release of ADP from the HSP70 and HSC70 proteins thereby triggering client/substrate protein release. This chain is BAG family molecular chaperone regulator 2 (BAG2), found in Homo sapiens (Human).